A 132-amino-acid chain; its full sequence is uncharacterized protein (132 aa).

Positions 39–93 are disordered; that stretch reads HPAGASEALGALPPPRQLVEKRRVSPPRRLDQSGRDGGAVAKCSLSRGLSPPGWT. The segment covering 56-72 has biased composition (basic and acidic residues); that stretch reads LVEKRRVSPPRRLDQSG.

This is an uncharacterized protein from Homo sapiens (Human).